The chain runs to 110 residues: Protein RnfH (110 aa).

Residues 86 to 110 (RQRRVEKTRKAGSIEGRRWQNKDSR) form a disordered region. Residues 100–110 (EGRRWQNKDSR) are compositionally biased toward basic and acidic residues.

The protein belongs to the UPF0125 (RnfH) family.

This is Protein RnfH from Paraburkholderia xenovorans (strain LB400).